The primary structure comprises 238 residues: Pyridoxine 5'-phosphate synthase (238 aa).

Positions 7 and 18 each coordinate 3-amino-2-oxopropyl phosphate. H43 serves as the catalytic Proton acceptor. 1-deoxy-D-xylulose 5-phosphate is bound by residues R45 and H50. E70 functions as the Proton acceptor in the catalytic mechanism. T100 provides a ligand contact to 1-deoxy-D-xylulose 5-phosphate. The active-site Proton donor is the H190. 3-amino-2-oxopropyl phosphate is bound by residues D191 and 213–214 (GH).

Belongs to the PNP synthase family. As to quaternary structure, homooctamer; tetramer of dimers.

The protein localises to the cytoplasm. The enzyme catalyses 3-amino-2-oxopropyl phosphate + 1-deoxy-D-xylulose 5-phosphate = pyridoxine 5'-phosphate + phosphate + 2 H2O + H(+). The protein operates within cofactor biosynthesis; pyridoxine 5'-phosphate biosynthesis; pyridoxine 5'-phosphate from D-erythrose 4-phosphate: step 5/5. Functionally, catalyzes the complicated ring closure reaction between the two acyclic compounds 1-deoxy-D-xylulose-5-phosphate (DXP) and 3-amino-2-oxopropyl phosphate (1-amino-acetone-3-phosphate or AAP) to form pyridoxine 5'-phosphate (PNP) and inorganic phosphate. In Phocaeicola vulgatus (strain ATCC 8482 / DSM 1447 / JCM 5826 / CCUG 4940 / NBRC 14291 / NCTC 11154) (Bacteroides vulgatus), this protein is Pyridoxine 5'-phosphate synthase.